The following is a 1191-amino-acid chain: Structural maintenance of chromosomes protein 3 (1191 aa).

Residue 32–39 (GRNGSGKS) coordinates ATP. An N6-acetyllysine mark is found at lysine 105, lysine 106, and lysine 140. Coiled-coil stretches lie at residues 173 to 357 (EESI…VKEK) and 389 to 504 (EERD…TGKA). Residues 242 to 268 (LSAKRETSGEKSRQLRDAQQDARDKME) form a disordered region. The SMC hinge domain maps to 530-642 (NGYHGIVMNN…CRSMEVSTQL (113 aa)). A coiled-coil region spans residues 668–1022 (YYDTRKSRLE…SIMELMNVLE (355 aa)). At threonine 783 the chain carries Phosphothreonine. Phosphoserine occurs at positions 787, 886, 1013, 1065, 1067, 1074, and 1083. The tract at residues 1059–1090 (KGDVEGSQSQDEGEGSGESERGSGSQSSVPSV) is disordered.

Belongs to the SMC family. SMC3 subfamily. Forms a heterodimer with SMC1A or SMC1B in cohesin complexes. Cohesin complexes are composed of the SMC1 (SMC1A or meiosis-specific SMC1B) and SMC3 heterodimer attached via their SMC hinge domain, RAD21 which link them, and one STAG protein (STAG1, STAG2 or STAG3), which interacts with RAD21. Also found in meiosis-specific cohesin complexes. Found in a complex with SMC1A, CDCA5 and RAD21, PDS5A/SCC-112 and PDS5B/APRIN. Interacts with MXI1, MXD3 and MXD4. Interacts with NUMA1, and forms a ternary complex with KIF3B and KIFAP3, suggesting a function in tethering the chromosomes to the spindle pole and a function in chromosome movement. Interacts with PDS5A and WAPL; regulated by SMC3 acetylation. Interacts (via SMC hinge domain) with KIAA1328 (via N- and C-terminal domains). Interacts with DDX11, RPGR and STAG3. The cohesin complex interacts with the cohesin loading complex subunits NIPBL/Scc2 (via HEAT repeats) and MAU2/Scc4. NIPBL directly contacts all members of the complex, RAD21, SMC1A/B, SMC3 and STAG1. Interacts with SYCP2. Interacts with the NuRD complex component HDAC2; the interaction is direct. Phosphorylated at Ser-1083 in a SPO11-dependent manner. Post-translationally, acetylation at Lys-105 and Lys-106 by ESCO1 is important for genome stability and S phase sister chromatid cohesion. Regulated by DSCC1, it is required for processive DNA synthesis, coupling sister chromatid cohesion establishment during S phase to DNA replication. Deacetylation by HDAC8, regulates release of the cohesin complex from chromatin. In terms of processing, ubiquitinated by the DCX(DCAF15) complex, leading to its degradation. In terms of tissue distribution, ubiquitous.

The protein localises to the nucleus. It localises to the chromosome. Its subcellular location is the centromere. Central component of cohesin, a complex required for chromosome cohesion during the cell cycle. The cohesin complex may form a large proteinaceous ring within which sister chromatids can be trapped. At anaphase, the complex is cleaved and dissociates from chromatin, allowing sister chromatids to segregate. Cohesion is coupled to DNA replication and is involved in DNA repair. The cohesin complex also plays an important role in spindle pole assembly during mitosis and in chromosomes movement. The sequence is that of Structural maintenance of chromosomes protein 3 (Smc3) from Rattus norvegicus (Rat).